The chain runs to 155 residues: SsrA-binding protein (155 aa).

This sequence belongs to the SmpB family.

It localises to the cytoplasm. Functionally, required for rescue of stalled ribosomes mediated by trans-translation. Binds to transfer-messenger RNA (tmRNA), required for stable association of tmRNA with ribosomes. tmRNA and SmpB together mimic tRNA shape, replacing the anticodon stem-loop with SmpB. tmRNA is encoded by the ssrA gene; the 2 termini fold to resemble tRNA(Ala) and it encodes a 'tag peptide', a short internal open reading frame. During trans-translation Ala-aminoacylated tmRNA acts like a tRNA, entering the A-site of stalled ribosomes, displacing the stalled mRNA. The ribosome then switches to translate the ORF on the tmRNA; the nascent peptide is terminated with the 'tag peptide' encoded by the tmRNA and targeted for degradation. The ribosome is freed to recommence translation, which seems to be the essential function of trans-translation. The sequence is that of SsrA-binding protein from Moorella thermoacetica (strain ATCC 39073 / JCM 9320).